The following is a 374-amino-acid chain: Chaperone protein DnaJ (374 aa).

The J domain maps to 4 to 69 (SYYEILEITQ…EKRAIYDRYG (66 aa)). Residues 136 to 213 (GCKKNIDFTY…CKGLGYNESK (78 aa)) form a CR-type zinc finger. The Zn(2+) site is built by C149, C152, C165, C168, C187, C190, C201, and C204. CXXCXGXG motif repeat units follow at residues 149–156 (CKTCNGTG), 165–172 (CPKCQGRG), 187–194 (CPDCQGSG), and 201–208 (CSDCKGLG).

The protein belongs to the DnaJ family. In terms of assembly, homodimer. Zn(2+) is required as a cofactor.

It is found in the cytoplasm. In terms of biological role, participates actively in the response to hyperosmotic and heat shock by preventing the aggregation of stress-denatured proteins and by disaggregating proteins, also in an autonomous, DnaK-independent fashion. Unfolded proteins bind initially to DnaJ; upon interaction with the DnaJ-bound protein, DnaK hydrolyzes its bound ATP, resulting in the formation of a stable complex. GrpE releases ADP from DnaK; ATP binding to DnaK triggers the release of the substrate protein, thus completing the reaction cycle. Several rounds of ATP-dependent interactions between DnaJ, DnaK and GrpE are required for fully efficient folding. Also involved, together with DnaK and GrpE, in the DNA replication of plasmids through activation of initiation proteins. The sequence is that of Chaperone protein DnaJ from Campylobacter jejuni subsp. jejuni serotype O:6 (strain 81116 / NCTC 11828).